A 258-amino-acid chain; its full sequence is MMNPLVIKLGGVLLDSEEALERLFTALVTYREKHERPLVIMHGGGCLVDELMKRLALPVVKKNGLRVTPADQIDIITGALAGTANKTLLAWAVKHQINAVGLCLADGNTVTVTLLDAELGHVGKAQPGSAALVQTLLAAGYMPIISSIGITVEGQLMNVNADQAATALAATLGADLILLSDVSGILDGKGQRIAEMTAQKAEQLIAQGIITDGMVVKVNAALDAARSLGRPVDIASWRHSEQLPALFNGVPIGTRISV.

Substrate contacts are provided by residues glycine 44–glycine 45, arginine 66, and asparagine 158. ATP contacts are provided by residues aspartate 181–leucine 186 and isoleucine 209–threonine 211.

Belongs to the acetylglutamate kinase family. ArgB subfamily. As to quaternary structure, homodimer.

The protein resides in the cytoplasm. It catalyses the reaction N-acetyl-L-glutamate + ATP = N-acetyl-L-glutamyl 5-phosphate + ADP. The protein operates within amino-acid biosynthesis; L-arginine biosynthesis; N(2)-acetyl-L-ornithine from L-glutamate: step 2/4. Functionally, catalyzes the ATP-dependent phosphorylation of N-acetyl-L-glutamate. This Yersinia pestis bv. Antiqua (strain Antiqua) protein is Acetylglutamate kinase.